A 275-amino-acid chain; its full sequence is Undecaprenyl-diphosphatase (275 aa).

7 helical membrane passes run 8–28 (WTIV…PIPI), 45–65 (ARGL…VLII), 92–112 (FMFV…GVLF), 119–139 (FIGE…AAAI), 197–217 (FSFL…IPNI), 225–245 (ELWI…YFAL), and 255–275 (GNLK…LIFL).

The protein belongs to the UppP family.

Its subcellular location is the cell membrane. The enzyme catalyses di-trans,octa-cis-undecaprenyl diphosphate + H2O = di-trans,octa-cis-undecaprenyl phosphate + phosphate + H(+). Catalyzes the dephosphorylation of undecaprenyl diphosphate (UPP). Confers resistance to bacitracin. The chain is Undecaprenyl-diphosphatase from Oceanobacillus iheyensis (strain DSM 14371 / CIP 107618 / JCM 11309 / KCTC 3954 / HTE831).